Reading from the N-terminus, the 95-residue chain is Protein Vpr (95 aa).

The homooligomerization stretch occupies residues 1–42; the sequence is MERAPEDAGPQREPYNEWALELLEELKNEAVRHFPRIWLHGL. Phosphoserine; by host occurs at positions 79, 93, and 95.

It belongs to the HIV-1 VPR protein family. In terms of assembly, homooligomer, may form homodimer. Interacts with p6-gag region of the Pr55 Gag precursor protein through a (Leu-X-X)4 motif near the C-terminus of the P6gag protein. Interacts with host UNG. May interact with host RAD23A/HHR23A. Interacts with host VPRBP/DCAF1, leading to hijack the CUL4A-RBX1-DDB1-DCAF1/VPRBP complex, mediating ubiquitination of host proteins such as TERT and ZGPAT and arrest of the cell cycle in G2 phase. In terms of processing, phosphorylated on several residues by host. These phosphorylations regulate VPR activity for the nuclear import of the HIV-1 pre-integration complex.

The protein localises to the virion. It localises to the host nucleus. The protein resides in the host extracellular space. Its function is as follows. During virus replication, may deplete host UNG protein, and incude G2-M cell cycle arrest. Acts by targeting specific host proteins for degradation by the 26S proteasome, through association with the cellular CUL4A-DDB1 E3 ligase complex by direct interaction with host VPRPB/DCAF-1. Cell cycle arrest reportedly occurs within hours of infection and is not blocked by antiviral agents, suggesting that it is initiated by the VPR carried into the virion. Additionally, VPR induces apoptosis in a cell cycle dependent manner suggesting that these two effects are mechanistically linked. Detected in the serum and cerebrospinal fluid of AIDS patient, VPR may also induce cell death to bystander cells. In terms of biological role, during virus entry, plays a role in the transport of the viral pre-integration (PIC) complex to the host nucleus. This function is crucial for viral infection of non-dividing macrophages. May act directly at the nuclear pore complex, by binding nucleoporins phenylalanine-glycine (FG)-repeat regions. This chain is Protein Vpr, found in Homo sapiens (Human).